The following is a 434-amino-acid chain: MESESESGAAADTPPLETLSFHGDEEIIEVVELDPGPPDPDDLAQEMEDVDFEEEEEEEGNEEGWVLEPQEGVVGSMEGPDDSEVTFALHSASVFCVSLDPKTNTLAVTGGEDDKAFVWRLSDGELLFECAGHKDSVTCAGFSHDSTLVATGDMSGLLKVWQVDTKEEVWSFEAGDLEWMEWHPRAPVLLAGTADGNTWMWKVPNGDCKTFQGPNCPATCGRVLPDGKRAVVGYEDGTIRIWDLKQGSPIHVLKGTEGHQGPLTCVAANQDGSLILTGSVDCQAKLVSATTGKVVGVFRPETVASQPSLGEGEESESNSVESLGFCSVMPLAAVGYLDGTLAIYDLATQTLRHQCQHQSGIVQLLWEAGTAVVYTCSLDGIVRLWDARTGRLLTDYRGHTAEILDFALSKDASLVVTTSGDHKAKVFCVQRPDR.

The segment at 1-63 (MESESESGAA…EEEEEEGNEE (63 aa)) is disordered. At S20 the chain carries Phosphoserine. The span at 39-62 (DPDDLAQEMEDVDFEEEEEEEGNE) shows a compositional bias: acidic residues. WD repeat units lie at residues 89–129 (LHSA…LLFE), 132–171 (GHKD…EVWS), 173–212 (EAGD…KTFQ), 214–254 (PNCP…HVLK), 258–299 (GHQG…GVFR), 315–354 (SESN…LRHQ), 356–395 (QHQS…LLTD), and 398–433 (GHTA…QRPD).

In terms of tissue distribution, expressed in metastatic melanoma, liver, skin, kidney, heart, lung, lymph node, skeletal muscle and brain, and also in A2058 melanoma cells and activated T-cells (at protein level). Expressed in blood vessels. Strongly expressed in endothelial cells, cytotrophoblasts, and poorly differentiated. colon adenocarcinoma cells found in lymphatics.

Its subcellular location is the cell membrane. It localises to the cytoplasm. Functionally, plays a role in angiogenesis and cell migration. In smooth muscle cell migration, may act through the RhoA pathway. In Homo sapiens (Human), this protein is Angio-associated migratory cell protein (AAMP).